The chain runs to 218 residues: Thiopurine S-methyltransferase (218 aa).

4 residues coordinate S-adenosyl-L-methionine: Trp-10, Leu-45, Glu-66, and Arg-123.

The protein belongs to the class I-like SAM-binding methyltransferase superfamily. TPMT family.

It localises to the cytoplasm. It carries out the reaction S-adenosyl-L-methionine + a thiopurine = S-adenosyl-L-homocysteine + a thiopurine S-methylether.. This Xanthomonas euvesicatoria pv. vesicatoria (strain 85-10) (Xanthomonas campestris pv. vesicatoria) protein is Thiopurine S-methyltransferase.